The chain runs to 211 residues: Thymidylate kinase (211 aa).

11–18 (GPDGAGKT) contacts ATP.

The protein belongs to the thymidylate kinase family.

It carries out the reaction dTMP + ATP = dTDP + ADP. Its function is as follows. Phosphorylation of dTMP to form dTDP in both de novo and salvage pathways of dTTP synthesis. This is Thymidylate kinase from Streptococcus uberis (strain ATCC BAA-854 / 0140J).